Consider the following 75-residue polypeptide: Putative membrane protein insertion efficiency factor (75 aa).

Belongs to the UPF0161 family.

The protein localises to the cell membrane. Its function is as follows. Could be involved in insertion of integral membrane proteins into the membrane. This chain is Putative membrane protein insertion efficiency factor, found in Bacillus velezensis (strain DSM 23117 / BGSC 10A6 / LMG 26770 / FZB42) (Bacillus amyloliquefaciens subsp. plantarum).